The primary structure comprises 211 residues: Histone H1t (211 aa).

The residue at position 1 (alanine 1) is an N-acetylalanine. Over residues 1 to 16 (AETAPAAPADSVPASV) the composition is skewed to low complexity. The segment at 1-42 (AETAPAAPADSVPASVEKPPAKKRGKKPVGLTGTSRKAPSAS) is disordered. Over residues 32–42 (TGTSRKAPSAS) the composition is skewed to polar residues. Positions 39–112 (PSASVSKLIT…GASGSFKLSK (74 aa)) constitute an H15 domain. Arginine 57 bears the Citrulline mark. The tract at residues 101–211 (GTGASGSFKL…TNPRKATNRK (111 aa)) is disordered. The span at 121–135 (GKVKKPAAAKTKKLV) shows a compositional bias: basic residues. At serine 142 the chain carries Phosphoserine. Residues 147–156 (KANKRAKKSR) are compositionally biased toward basic residues. Threonine 158 is modified (phosphothreonine). Serine 166 and serine 181 each carry phosphoserine. Basic residues predominate over residues 176–189 (KQQRKSPAKARAAK).

Belongs to the histone H1/H5 family. Phosphorylated in early spermatids. In terms of processing, citrullination at Arg-57 (H1R54ci) by PADI4 takes place within the DNA-binding site of H1 and results in its displacement from chromatin and global chromatin decondensation, thereby promoting pluripotency and stem cell maintenance. As to expression, testis-specific.

It localises to the nucleus. The protein resides in the chromosome. Its function is as follows. Testis-specific histone H1 that forms less compacted chromatin compared to other H1 histone subtypes. Formation of more relaxed chromatin may be required to promote chromatin architecture required for proper chromosome regulation during meiosis, such as homologous recombination. Histones H1 act as linkers that bind to nucleosomes and compact polynucleosomes into a higher-order chromatin configuration. The sequence is that of Histone H1t from Sus scrofa (Pig).